The sequence spans 145 residues: D-aminoacyl-tRNA deacylase (145 aa).

The Gly-cisPro motif, important for rejection of L-amino acids motif lies at 137–138 (GP).

This sequence belongs to the DTD family. As to quaternary structure, homodimer.

The protein localises to the cytoplasm. The catalysed reaction is glycyl-tRNA(Ala) + H2O = tRNA(Ala) + glycine + H(+). It carries out the reaction a D-aminoacyl-tRNA + H2O = a tRNA + a D-alpha-amino acid + H(+). Functionally, an aminoacyl-tRNA editing enzyme that deacylates mischarged D-aminoacyl-tRNAs. Also deacylates mischarged glycyl-tRNA(Ala), protecting cells against glycine mischarging by AlaRS. Acts via tRNA-based rather than protein-based catalysis; rejects L-amino acids rather than detecting D-amino acids in the active site. By recycling D-aminoacyl-tRNA to D-amino acids and free tRNA molecules, this enzyme counteracts the toxicity associated with the formation of D-aminoacyl-tRNA entities in vivo and helps enforce protein L-homochirality. The sequence is that of D-aminoacyl-tRNA deacylase from Shewanella loihica (strain ATCC BAA-1088 / PV-4).